The chain runs to 449 residues: Histidinol dehydrogenase (449 aa).

NAD(+)-binding residues include tyrosine 136, glutamine 204, and asparagine 232. The substrate site is built by threonine 255, glutamine 277, and histidine 280. Residues glutamine 277 and histidine 280 each coordinate Zn(2+). Catalysis depends on proton acceptor residues glutamate 346 and histidine 347. Substrate contacts are provided by histidine 347, aspartate 380, glutamate 434, and histidine 439. Aspartate 380 is a Zn(2+) binding site. Histidine 439 serves as a coordination point for Zn(2+).

It belongs to the histidinol dehydrogenase family. Requires Zn(2+) as cofactor.

The catalysed reaction is L-histidinol + 2 NAD(+) + H2O = L-histidine + 2 NADH + 3 H(+). It functions in the pathway amino-acid biosynthesis; L-histidine biosynthesis; L-histidine from 5-phospho-alpha-D-ribose 1-diphosphate: step 9/9. Functionally, catalyzes the sequential NAD-dependent oxidations of L-histidinol to L-histidinaldehyde and then to L-histidine. This Mycobacterium leprae (strain TN) protein is Histidinol dehydrogenase (hisD).